Consider the following 269-residue polypeptide: tRNA uridine(34) hydroxylase (269 aa).

Residues 121-214 form the Rhodanese domain; that stretch reads SQPDVLVIDT…YLERTHNKNG (94 aa). The active-site Cysteine persulfide intermediate is cysteine 174.

Belongs to the TrhO family.

The catalysed reaction is uridine(34) in tRNA + AH2 + O2 = 5-hydroxyuridine(34) in tRNA + A + H2O. Catalyzes oxygen-dependent 5-hydroxyuridine (ho5U) modification at position 34 in tRNAs. In Wolbachia sp. subsp. Brugia malayi (strain TRS), this protein is tRNA uridine(34) hydroxylase.